The sequence spans 345 residues: Trace amine-associated receptor 6 (345 aa).

Residues 1–32 lie on the Extracellular side of the membrane; that stretch reads MGSNSSPPAVLQLCYENVNGSCVKTPYSPGPR. N-linked (GlcNAc...) asparagine glycosylation is present at Asn-19. 2 disulfides stabilise this stretch: Cys-22–Cys-186 and Cys-105–Cys-190. Residues 33–53 traverse the membrane as a helical segment; sequence VLLYAVFGFGAVLAVFGNLLV. The Cytoplasmic portion of the chain corresponds to 54 to 68; that stretch reads MISILHFKQLHSPTN. The chain crosses the membrane as a helical span at residues 69–89; it reads FLIASLACADFWVGVSVMPFS. Topologically, residues 90-107 are extracellular; the sequence is MVRSIESCWYFGRSFCTF. The helical transmembrane segment at 108 to 128 threads the bilayer; sequence HTCCDVAFCYSSLFHLSFISI. The Cytoplasmic segment spans residues 129–147; that stretch reads DRYIAVTDPLVYPTKFTVS. A helical membrane pass occupies residues 148–168; the sequence is VSGICISISWILPLAYSGAVF. Residues 169 to 202 lie on the Extracellular side of the membrane; that stretch reads YTGVYADGLEEVSDAVNCVGGCQVVVNQNWVLID. The chain crosses the membrane as a helical span at residues 203–223; it reads FLSFLIPTLVMIILYGNIFLV. At 224–259 the chain is on the cytoplasmic side; sequence ARQQAKKIETVGNKAESSSESYKARVARRERKAAKT. Residues 260–276 traverse the membrane as a helical segment; that stretch reads LGITVVAFMISWLPYSI. Residues 277-282 lie on the Extracellular side of the membrane; sequence DSLVDA. Residues 283-302 form a helical membrane-spanning segment; that stretch reads FMGFITPAYIYEICVWCAYY. The Cytoplasmic portion of the chain corresponds to 303 to 345; that stretch reads NSAMNPLIYALFYPWFKKAIKVIMSGQVFKNSSATMNLFSEQI.

This sequence belongs to the G-protein coupled receptor 1 family.

Its subcellular location is the cell membrane. Its function is as follows. Olfactory receptor specific for trace amines, such as beta-phenylethylamine (beta-PEA). Trace amine compounds are enriched in animal body fluids and act on trace amine-associated receptors (TAARs) to elicit both intraspecific and interspecific innate behaviors. Beta-PEA-binding causes a conformation change that triggers signaling via G(s)-class of G alpha proteins (GNAL or GNAS). This chain is Trace amine-associated receptor 6 (Taar6), found in Rattus norvegicus (Rat).